Reading from the N-terminus, the 553-residue chain is Putative transport protein YidE (553 aa).

The next 5 helical transmembrane spans lie at 4–24 (IALT…IGNV), 28–48 (GIGL…HFVS), 65–85 (FGLI…FFAS), 95–115 (LFAV…HKLF), and 158–178 (MSYA…MWML). RCK C-terminal domains lie at 191–276 (QQHE…VIGQ) and 279–361 (DTSL…VLGN). The next 5 helical transmembrane spans lie at 371–391 (MLPV…PVFV), 394–414 (FPAA…LILG), 439–459 (IVLF…NTLV), 464–484 (LSWI…VGIL), and 533–553 (LVMF…WSIG).

Belongs to the AAE transporter (TC 2.A.81) family. YidE subfamily.

Its subcellular location is the cell membrane. The sequence is that of Putative transport protein YidE from Shigella dysenteriae serotype 1 (strain Sd197).